A 278-amino-acid chain; its full sequence is Tryptophan synthase alpha chain (278 aa).

Catalysis depends on proton acceptor residues Glu-50 and Asp-61.

It belongs to the TrpA family. Tetramer of two alpha and two beta chains.

The catalysed reaction is (1S,2R)-1-C-(indol-3-yl)glycerol 3-phosphate + L-serine = D-glyceraldehyde 3-phosphate + L-tryptophan + H2O. The protein operates within amino-acid biosynthesis; L-tryptophan biosynthesis; L-tryptophan from chorismate: step 5/5. The alpha subunit is responsible for the aldol cleavage of indoleglycerol phosphate to indole and glyceraldehyde 3-phosphate. This is Tryptophan synthase alpha chain from Methylorubrum populi (strain ATCC BAA-705 / NCIMB 13946 / BJ001) (Methylobacterium populi).